Here is a 324-residue protein sequence, read N- to C-terminus: Arginase (324 aa).

Residues histidine 115, aspartate 143, histidine 145, and aspartate 147 each contribute to the Mn(2+) site. Substrate is bound by residues 145-149, 156-158, and aspartate 202; these read HADIN and SGN. Mn(2+) is bound by residues aspartate 249 and aspartate 251. Substrate-binding residues include threonine 263 and glutamate 294.

It belongs to the arginase family. As to quaternary structure, homotrimer. The cofactor is Mn(2+).

The enzyme catalyses L-arginine + H2O = urea + L-ornithine. It participates in nitrogen metabolism; urea cycle; L-ornithine and urea from L-arginine: step 1/1. This is Arginase (agaA) from Emericella nidulans (strain FGSC A4 / ATCC 38163 / CBS 112.46 / NRRL 194 / M139) (Aspergillus nidulans).